A 102-amino-acid polypeptide reads, in one-letter code: Small ribosomal subunit protein uS10 (102 aa).

The protein belongs to the universal ribosomal protein uS10 family. In terms of assembly, part of the 30S ribosomal subunit.

Its function is as follows. Involved in the binding of tRNA to the ribosomes. The chain is Small ribosomal subunit protein uS10 from Agrobacterium fabrum (strain C58 / ATCC 33970) (Agrobacterium tumefaciens (strain C58)).